Here is a 244-residue protein sequence, read N- to C-terminus: Reticulon-like protein B7 (244 aa).

Residues Pro70 to His244 enclose the Reticulon domain. Helical transmembrane passes span Lys80–Gly100, Leu103–Asn123, and Phe172–Leu192.

It is found in the endoplasmic reticulum membrane. This Arabidopsis thaliana (Mouse-ear cress) protein is Reticulon-like protein B7 (RTNLB7).